The following is a 526-amino-acid chain: MIRIGSNLIKQSIKNTNKSGISRFFTTGSNNSTNYKPESCVKEEPKGKSVNVEDLKDQEIIALVDKGEIQPHNLETRLPNNFQRAVHIRRKLLARDLQKEHQRALHAQAVVAAAEKAATSGEDPSSIQPVVPPTSNLDFEGSLTNLPVDHFDYTKVLGACCENVIGYIPIPVGVAGPILLDGKLVSIPMATTEGCLVASTHRGAKAITKSGGAKTVLLQSGMTRAPVCRLPSSIRAGELKQWIENQENFYQVASAFNSTSRFARLKSIKVVIAGRLVYLRFKSSTGDAMGMNMVSKGVEKALEVITEYFPEMEVLSLSGNVCTDKKPSSINWLEGRGKSVVAEAVISGDIVRDVLKTTVEALVSLNIDKNLIGSAMAGSIGGFNAHASNIVTALYIATGQDPAQNVESSNCITLMESINGGKDLYISVTMPSIEVGTVGGGTHLPAQSACLDLLKIRGANLERPGANSEQLARVVAAAVLSGELSLMSALAAGHLVRSHLKHNRKTEAPAPQADTISMTHNLPHSD.

Residues Glu193, Lys325, and Asp401 each act as charge relay system in the active site. The Proton donor role is filled by His499. The disordered stretch occupies residues Asn503 to Asp526. Residues Asp514–Asp526 are compositionally biased toward polar residues.

The protein belongs to the HMG-CoA reductase family.

The catalysed reaction is (R)-mevalonate + 2 NADP(+) + CoA = (3S)-3-hydroxy-3-methylglutaryl-CoA + 2 NADPH + 2 H(+). The protein operates within metabolic intermediate biosynthesis; (R)-mevalonate biosynthesis; (R)-mevalonate from acetyl-CoA: step 3/3. This transmembrane glycoprotein is involved in the control of cholesterol biosynthesis. It is the rate-limiting enzyme of the sterol biosynthesis. This Dictyostelium discoideum (Social amoeba) protein is 3-hydroxy-3-methylglutaryl-coenzyme A reductase 2 (hmgB).